A 134-amino-acid polypeptide reads, in one-letter code: Probable glycine cleavage system H protein (134 aa).

Residues 29 to 110 enclose the Lipoyl-binding domain; sequence TVLVGITDYA…PYGAWIAKIK (82 aa). N6-lipoyllysine is present on lysine 70.

This sequence belongs to the GcvH family. The glycine cleavage system is composed of four proteins: P, T, L and H. (R)-lipoate serves as cofactor.

In terms of biological role, the glycine cleavage system catalyzes the degradation of glycine. The H protein shuttles the methylamine group of glycine from the P protein to the T protein. This chain is Probable glycine cleavage system H protein, found in Pyrococcus abyssi (strain GE5 / Orsay).